The following is a 61-amino-acid chain: ERMES regulator 1 (61 aa).

The Mitochondrial intermembrane portion of the chain corresponds to 1–20 (MLPNLRRIFASFRTEEEERS). Residues 21 to 43 (YSRKAFFHLIGYITCSVLFSWLV) traverse the membrane as a helical segment. Topologically, residues 44-61 (RKKVISSPVVSSPIHALS) are cytoplasmic.

The protein belongs to the EMR1 family. As to quaternary structure, interacts with the ER-mitochondria encounter structure (ERMES) complex. Interacts with mdm12. Interacts with mdm34.

The protein resides in the mitochondrion outer membrane. In terms of biological role, mediates the formation of endoplasmic reticulum (ER)-mitochondria encounter structure (ERMES) foci, thereby contributing to the formation of ER-mitochondrial contact sites. The sequence is that of ERMES regulator 1 from Schizosaccharomyces pombe (strain 972 / ATCC 24843) (Fission yeast).